The following is a 283-amino-acid chain: Non-selective voltage-gated ion channel VDAC1 (283 aa).

Ala-2 bears the N-acetylalanine mark. ATP is bound at residue Lys-12. Lys-12 participates in a covalent cross-link: Glycyl lysine isopeptide (Lys-Gly) (interchain with G-Cter in ubiquitin). The residue at position 13 (Ser-13) is a Phosphoserine. Thr-19 is subject to Phosphothreonine. An ATP-binding site is contributed by Lys-20. Lys-20 carries the post-translational modification N6-acetyllysine; alternate. N6-succinyllysine; alternate is present on Lys-20. Lys-20 is covalently cross-linked (Glycyl lysine isopeptide (Lys-Gly) (interchain with G-Cter in ubiquitin); alternate). The next 2 membrane-spanning stretches (beta stranded) occupy residues 26–35 (LIKLDLKTKS) and 39–47 (LEFTSSGSA). Residues Lys-53 and Lys-61 each participate in a glycyl lysine isopeptide (Lys-Gly) (interchain with G-Cter in ubiquitin) cross-link. The chain crosses the membrane as a beta stranded span at residues 54-64 (VTGSLETKYRW). Tyr-67 carries the phosphotyrosine modification. Transmembrane regions (beta stranded) follow at residues 69–76 (LTFTEKWN), 80–89 (TLGTEITVED), and 95–104 (LKLTFDSSFS). Thr-107 is modified (phosphothreonine). At Lys-109 the chain carries N6-acetyllysine; alternate. Lys-109 is covalently cross-linked (Glycyl lysine isopeptide (Lys-Gly) (interchain with G-Cter in ubiquitin); alternate). Lys-110 participates in a covalent cross-link: Glycyl lysine isopeptide (Lys-Gly) (interchain with G-Cter in ubiquitin). Beta stranded transmembrane passes span 111–120 (NAKIKTGYKR), 123–130 (VNLGCDVD), 137–145 (SIRGALVLG), and 150–158 (LAGYQMNFE). Lys-161 is covalently cross-linked (Glycyl lysine isopeptide (Lys-Gly) (interchain with G-Cter in ubiquitin)). 6 consecutive transmembrane segments (beta stranded) span residues 163–175 (RVTQSNFAVGYKT), 178–185 (FQLHTNVN), 189–198 (EFGGSIYQKV), 202–211 (LETAVNLAWT), 218–227 (RFGIAAKYQI), and 231–238 (ACFSAKVN). Residue Ser-193 is modified to Phosphoserine; by NEK1. Ser-240 is modified (phosphoserine). Residue 242–244 (LIG) coordinates NAD(+). A beta stranded membrane pass occupies residues 242 to 251 (LIGLGYTQTL). Residue Lys-252 is modified to N6-acetyllysine. Residues 254-263 (GIKLTLSALL) form a beta stranded membrane-spanning segment. 260–264 (SALLD) serves as a coordination point for NAD(+). At Lys-266 the chain carries N6-acetyllysine; alternate. A Glycyl lysine isopeptide (Lys-Gly) (interchain with G-Cter in ubiquitin); alternate cross-link involves residue Lys-266. A beta stranded membrane pass occupies residues 273-282 (HKLGLGLEFQ). Residue Lys-274 forms a Glycyl lysine isopeptide (Lys-Gly) (interchain with G-Cter in ubiquitin) linkage.

It belongs to the eukaryotic mitochondrial porin family. In terms of assembly, homodimer and homotrimer; in response to cyclic AMP or calcium; oligomerization is required for scramblase activity. Component of the mitochondrial permeability transition pore complex (mPTPC), at least composed of SPG7, VDAC1 and PPIF. Interacts with SPG7, NIPSNAP2 and SLC25A30. Interacts with hexokinases including HK1. The HK1-VDAC1 complex interacts with ATF2. Interacts with BCL2L1. Interacts with BAK1. Interacts with RTL10/BOP (via BH3 domain). Interacts with amyloid-beta and APP; induces VDAC1 dephosphorylation. Interacts with TMEM41B. Interacts with BCAP31. Interacts with HSPA9; this interaction couples ITPR1 to VDAC1. In terms of processing, phosphorylation at Ser-193 by NEK1 promotes the closed conformational state preventing excessive mitochondrial membrane permeability and subsequent apoptotic cell death after injury. Phosphorylation by the AKT-GSK3B axis stabilizes the protein probably by preventing ubiquitin-mediated proteasomal degradation. Post-translationally, ubiquitinated. Undergoes monoubiquitination and polyubiquitination by PRKN; monoubiquitination at Lys-274 inhibits apoptosis, whereas polyubiquitination leads to its degradation and promotes mitophagy. Deubiquitinated by USP30.

It is found in the mitochondrion outer membrane. Its subcellular location is the cell membrane. The protein resides in the membrane raft. It carries out the reaction chloride(in) = chloride(out). The enzyme catalyses K(+)(in) = K(+)(out). It catalyses the reaction ATP(in) = ATP(out). The catalysed reaction is Ca(2+)(in) = Ca(2+)(out). It carries out the reaction Na(+)(in) = Na(+)(out). The enzyme catalyses Mg(2+)(in) = Mg(2+)(out). It catalyses the reaction L-glutamate(out) = L-glutamate(in). The catalysed reaction is dopamine(out) = dopamine(in). It carries out the reaction acetylcholine(in) = acetylcholine(out). The enzyme catalyses Fe(III)-[cytochrome c](out) = Fe(III)-[cytochrome c](in). It catalyses the reaction a 1,2-diacyl-sn-glycero-3-phosphocholine(in) = a 1,2-diacyl-sn-glycero-3-phosphocholine(out). The catalysed reaction is a 1,2-diacyl-sn-glycero-3-phospho-L-serine(in) = a 1,2-diacyl-sn-glycero-3-phospho-L-serine(out). Its activity is regulated as follows. Inhibited by nitric oxide. Non-selective voltage-gated ion channel that mediates the transport of anions and cations through the mitochondrion outer membrane and plasma membrane. The channel at the outer mitochondrial membrane allows diffusion of small hydrophilic molecules; in the plasma membrane it is involved in cell volume regulation and apoptosis. It adopts an open conformation at low or zero membrane potential and a closed conformation at potentials above 30-40 mV. The open state has a weak anion selectivity whereas the closed state is cation-selective. Binds various signaling molecules, including the sphingolipid ceramide, the phospholipid phosphatidylcholine, and the sterols cholesterol and oxysterol. In depolarized mitochondria, acts downstream of PRKN and PINK1 to promote mitophagy or prevent apoptosis; polyubiquitination by PRKN promotes mitophagy, while monoubiquitination by PRKN decreases mitochondrial calcium influx which ultimately inhibits apoptosis. May participate in the formation of the permeability transition pore complex (PTPC) responsible for the release of mitochondrial products that triggers apoptosis. May mediate ATP export from cells. Part of a complex composed of HSPA9, ITPR1 and VDAC1 that regulates mitochondrial calcium-dependent apoptosis by facilitating calcium transport from the ER lumen to the mitochondria intermembrane space thus providing calcium for the downstream calcium channel MCU that directly releases it into mitochondria matrix. Mediates cytochrome c efflux. Its function is as follows. Catalyzes the scrambling of phospholipids across the outer mitochondrial membrane; the mechanism is unrelated to channel activity and is capable of translocating both anionic and zwitterionic phospholipids. The sequence is that of Non-selective voltage-gated ion channel VDAC1 from Sus scrofa (Pig).